Consider the following 332-residue polypeptide: Glycerol-3-phosphate dehydrogenase [NAD(P)+] (332 aa).

NADPH is bound by residues Ser11, Trp12, Arg32, Arg33, and Lys106. Positions 106 and 136 each coordinate sn-glycerol 3-phosphate. Residue Ala140 coordinates NADPH. Residues Lys191, Asp244, Ser254, Arg255, and Asn256 each coordinate sn-glycerol 3-phosphate. Lys191 serves as the catalytic Proton acceptor. Arg255 contacts NADPH. NADPH contacts are provided by Val280 and Glu282.

It belongs to the NAD-dependent glycerol-3-phosphate dehydrogenase family.

Its subcellular location is the cytoplasm. It carries out the reaction sn-glycerol 3-phosphate + NAD(+) = dihydroxyacetone phosphate + NADH + H(+). The enzyme catalyses sn-glycerol 3-phosphate + NADP(+) = dihydroxyacetone phosphate + NADPH + H(+). The protein operates within membrane lipid metabolism; glycerophospholipid metabolism. In terms of biological role, catalyzes the reduction of the glycolytic intermediate dihydroxyacetone phosphate (DHAP) to sn-glycerol 3-phosphate (G3P), the key precursor for phospholipid synthesis. The chain is Glycerol-3-phosphate dehydrogenase [NAD(P)+] from Corynebacterium glutamicum (strain R).